The sequence spans 326 residues: MAMTGVVKDELSRLTVLKPCCRKAEVSTILRFTGGLHLVGGRIVIESELDTGVAARRLRKDIAEVFGHESEVLVLSPSGLRKGNRYVVRVIKEGESLARQTGLIDSNGRPVRGLPRHVVAGGVCDAESAWRGAFIAHGSLTEPGRSMSLEVTCPGPEAALALVGAARRLKVHAKAREVRGVDRVVVRDGDSISAMLTRLGAHQSVLAWEERRMRREVRATANRLANFDDANLRRSARAAVAAGARVQRALEILADDAPPHLVAAGKLRLKHKQASLEELGQLADPPLTKDAIAGRIRRLLAMADKRAADLGIPNTEASLTPDMLVP.

The H-T-H motif DNA-binding region spans 275–308 (SLEELGQLADPPLTKDAIAGRIRRLLAMADKRAA).

The protein belongs to the WhiA family.

Functionally, involved in cell division and chromosome segregation. The sequence is that of Probable cell division protein WhiA from Thermobifida fusca (strain YX).